Reading from the N-terminus, the 330-residue chain is Glucan endo-1,3-beta-glucosidase GIII (330 aa).

Positions Met-1–Ser-25 are cleaved as a signal peptide. The active-site Proton donor is Glu-117. Catalysis depends on Glu-255, which acts as the Nucleophile.

This sequence belongs to the glycosyl hydrolase 17 family.

It catalyses the reaction Hydrolysis of (1-&gt;3)-beta-D-glucosidic linkages in (1-&gt;3)-beta-D-glucans.. May provide a degree of protection against microbial invasion of germinated barley grain through its ability to degrade fungal cell wall polysaccharides. The chain is Glucan endo-1,3-beta-glucosidase GIII from Hordeum vulgare (Barley).